The sequence spans 72 residues: Large ribosomal subunit protein uL29 (72 aa).

Belongs to the universal ribosomal protein uL29 family.

This Chlamydia caviae (strain ATCC VR-813 / DSM 19441 / 03DC25 / GPIC) (Chlamydophila caviae) protein is Large ribosomal subunit protein uL29.